Consider the following 442-residue polypeptide: Glutamyl-tRNA reductase (442 aa).

Residues 49–52 (TCNR), Ser-109, 114–116 (EGQ), and Gln-120 contribute to the substrate site. The Nucleophile role is filled by Cys-50. 198-203 (GAGRMA) provides a ligand contact to NADP(+). The disordered stretch occupies residues 420 to 442 (MAAAQRLFDLPGDDADRDRSDAK). Residues 433-442 (DADRDRSDAK) are compositionally biased toward basic and acidic residues.

This sequence belongs to the glutamyl-tRNA reductase family. In terms of assembly, homodimer.

It carries out the reaction (S)-4-amino-5-oxopentanoate + tRNA(Glu) + NADP(+) = L-glutamyl-tRNA(Glu) + NADPH + H(+). The protein operates within porphyrin-containing compound metabolism; protoporphyrin-IX biosynthesis; 5-aminolevulinate from L-glutamyl-tRNA(Glu): step 1/2. Its pathway is porphyrin-containing compound metabolism; chlorophyll biosynthesis. Its function is as follows. Catalyzes the NADPH-dependent reduction of glutamyl-tRNA(Glu) to glutamate 1-semialdehyde (GSA). The protein is Glutamyl-tRNA reductase of Synechococcus sp. (strain RCC307).